Reading from the N-terminus, the 86-residue chain is YcgL domain-containing protein XCV4171 (86 aa).

Positions 1–83 constitute a YcgL domain; the sequence is MHAYVYKSQR…PKTIVLAGEC (83 aa).

This chain is YcgL domain-containing protein XCV4171, found in Xanthomonas euvesicatoria pv. vesicatoria (strain 85-10) (Xanthomonas campestris pv. vesicatoria).